We begin with the raw amino-acid sequence, 412 residues long: DNA replication and repair protein RecF (412 aa).

G30–T37 serves as a coordination point for ATP. Residues L369–D412 form a disordered region. Residues G389–D412 are compositionally biased toward low complexity.

This sequence belongs to the RecF family.

The protein localises to the cytoplasm. The RecF protein is involved in DNA metabolism; it is required for DNA replication and normal SOS inducibility. RecF binds preferentially to single-stranded, linear DNA. It also seems to bind ATP. The protein is DNA replication and repair protein RecF of Salinibacter ruber (strain DSM 13855 / M31).